A 358-amino-acid chain; its full sequence is Cytoplasmic tRNA 2-thiolation protein 1 (358 aa).

It belongs to the TtcA family. CTU1/NCS6/ATPBD3 subfamily.

It is found in the cytoplasm. It functions in the pathway tRNA modification; 5-methoxycarbonylmethyl-2-thiouridine-tRNA biosynthesis. In terms of biological role, plays a central role in 2-thiolation of mcm(5)S(2)U at tRNA wobble positions of tRNA(Lys), tRNA(Glu) and tRNA(Gln). Directly binds tRNAs and probably acts by catalyzing adenylation of tRNAs, an intermediate required for 2-thiolation. It is unclear whether it acts as a sulfurtransferase that transfers sulfur from thiocarboxylated URM1 onto the uridine of tRNAs at wobble position. Prior mcm(5) tRNA modification by the elongator complex is required for 2-thiolation. May also be involved in protein urmylation. In Candida glabrata (strain ATCC 2001 / BCRC 20586 / JCM 3761 / NBRC 0622 / NRRL Y-65 / CBS 138) (Yeast), this protein is Cytoplasmic tRNA 2-thiolation protein 1.